The following is a 565-amino-acid chain: NAD-dependent malic enzyme (565 aa).

The active-site Proton donor is tyrosine 104. Arginine 157 contributes to the NAD(+) binding site. Residue lysine 175 is the Proton acceptor of the active site. 3 residues coordinate a divalent metal cation: glutamate 246, aspartate 247, and aspartate 270. Residues aspartate 270 and asparagine 418 each coordinate NAD(+).

It belongs to the malic enzymes family. As to quaternary structure, homotetramer. It depends on Mg(2+) as a cofactor. Requires Mn(2+) as cofactor.

It catalyses the reaction (S)-malate + NAD(+) = pyruvate + CO2 + NADH. The catalysed reaction is oxaloacetate + H(+) = pyruvate + CO2. The sequence is that of NAD-dependent malic enzyme from Escherichia coli (strain K12 / MC4100 / BW2952).